Reading from the N-terminus, the 257-residue chain is Ribonuclease HII (257 aa).

Positions 72–257 constitute an RNase H type-2 domain; it reads TYIAGIDEVG…FAPIKDMIQK (186 aa). 3 residues coordinate a divalent metal cation: Asp78, Glu79, and Asp170.

The protein belongs to the RNase HII family. The cofactor is Mn(2+). Requires Mg(2+) as cofactor.

It localises to the cytoplasm. The catalysed reaction is Endonucleolytic cleavage to 5'-phosphomonoester.. Functionally, endonuclease that specifically degrades the RNA of RNA-DNA hybrids. The sequence is that of Ribonuclease HII from Bacillus cereus (strain ZK / E33L).